Reading from the N-terminus, the 142-residue chain is Small ribosomal subunit protein uS12 (142 aa).

Residues 1–43 are disordered; the sequence is MPTFNQLVRKGRKVIEKKSNSPALQKGFNSKKKKPTDVNSPQK. A 3-methylthioaspartic acid modification is found at Asp-102.

It belongs to the universal ribosomal protein uS12 family. As to quaternary structure, part of the 30S ribosomal subunit. Contacts proteins S8 and S17. May interact with IF1 in the 30S initiation complex.

With S4 and S5 plays an important role in translational accuracy. Its function is as follows. Interacts with and stabilizes bases of the 16S rRNA that are involved in tRNA selection in the A site and with the mRNA backbone. Located at the interface of the 30S and 50S subunits, it traverses the body of the 30S subunit contacting proteins on the other side and probably holding the rRNA structure together. The combined cluster of proteins S8, S12 and S17 appears to hold together the shoulder and platform of the 30S subunit. The protein is Small ribosomal subunit protein uS12 of Ruminiclostridium cellulolyticum (strain ATCC 35319 / DSM 5812 / JCM 6584 / H10) (Clostridium cellulolyticum).